The chain runs to 199 residues: Recombination protein RecR (199 aa).

A C4-type zinc finger spans residues 58–73 (CARCGNITSADLCDIC). The Toprim domain occupies 81–176 (GELCVVEDVA…QVTSLAQGVP (96 aa)).

It belongs to the RecR family.

In terms of biological role, may play a role in DNA repair. It seems to be involved in an RecBC-independent recombinational process of DNA repair. It may act with RecF and RecO. The polypeptide is Recombination protein RecR (Cereibacter sphaeroides (strain ATCC 17025 / ATH 2.4.3) (Rhodobacter sphaeroides)).